Reading from the N-terminus, the 605-residue chain is Aspartate--tRNA(Asp/Asn) ligase (605 aa).

Glu-178 serves as a coordination point for L-aspartate. The tract at residues 202–205 is aspartate; it reads QLFK. Arg-224 provides a ligand contact to L-aspartate. ATP contacts are provided by residues 224-226 and Gln-233; that span reads RDE. L-aspartate is bound at residue His-458. Glu-488 lines the ATP pocket. Arg-495 is a binding site for L-aspartate. 540-543 contacts ATP; it reads GLDR. The tract at residues 580–605 is disordered; the sequence is QQLKELHVTPAKPAKTTAKTKPRPAD.

The protein belongs to the class-II aminoacyl-tRNA synthetase family. Type 1 subfamily. As to quaternary structure, homodimer.

Its subcellular location is the cytoplasm. It catalyses the reaction tRNA(Asx) + L-aspartate + ATP = L-aspartyl-tRNA(Asx) + AMP + diphosphate. Functionally, aspartyl-tRNA synthetase with relaxed tRNA specificity since it is able to aspartylate not only its cognate tRNA(Asp) but also tRNA(Asn). Reaction proceeds in two steps: L-aspartate is first activated by ATP to form Asp-AMP and then transferred to the acceptor end of tRNA(Asp/Asn). This Thermosynechococcus vestitus (strain NIES-2133 / IAM M-273 / BP-1) protein is Aspartate--tRNA(Asp/Asn) ligase.